The following is a 760-amino-acid chain: Transglutaminase-activating metalloprotease (760 aa).

An N-terminal signal peptide occupies residues 1 to 33; it reads MRPTPQRRAVATGALVAVTAMLAVGVQTTSANA. Disordered regions lie at residues 32–59 and 228–265; these read NAGQ…PVKL and KQGT…KTYN. Positions 34 to 229 are excised as a propeptide; that stretch reads GQDKAAHPAP…KLFEFQGVKQ (196 aa). A compositionally biased stretch (polar residues) spans 228–257; that stretch reads KQGTGNSQHSGQVQIGTTKSGSSYQMNDTT. Residue H366 participates in Zn(2+) binding. The active site involves E367. Zn(2+)-binding residues include H370 and E390. H454 serves as the catalytic Proton donor. One can recognise a P/Homo B domain in the interval 640–760; it reads TVNTTGGGSV…GTIDKWRLTF (121 aa).

The protein belongs to the peptidase M4 family. Zn(2+) serves as cofactor.

Its subcellular location is the secreted. In terms of biological role, cleaves the N-terminal propeptide of transglutaminase thus activating it. The polypeptide is Transglutaminase-activating metalloprotease (Streptomyces mobaraensis (Streptoverticillium mobaraense)).